Consider the following 128-residue polypeptide: Translation initiation factor 5A (128 aa).

Lysine 35 carries the post-translational modification Hypusine.

The protein belongs to the eIF-5A family.

The protein localises to the cytoplasm. Functionally, functions by promoting the formation of the first peptide bond. This Methanosarcina acetivorans (strain ATCC 35395 / DSM 2834 / JCM 12185 / C2A) protein is Translation initiation factor 5A (eif5a).